The chain runs to 27 residues: Small ribosomal subunit protein bTHX (27 aa).

Residues 1–13 (MGKGDRRTRRGKI) show a composition bias toward basic residues. The segment at 1–27 (MGKGDRRTRRGKIWRGTYGKYRPRKKK) is disordered.

This sequence belongs to the bacterial ribosomal protein bTHX family. Part of the 30S ribosomal subunit.

Binds at the top of the head of the 30S subunit. It stabilizes a number of different RNA elements and thus is important for subunit structure. The protein is Small ribosomal subunit protein bTHX (rpsU) of Thermus aquaticus.